A 346-amino-acid chain; its full sequence is Porphobilinogen deaminase (346 aa).

C242 carries the S-(dipyrrolylmethanemethyl)cysteine modification. The segment at 317-346 is disordered; that stretch reads ATEPGARSGTGAVRPPETDLSNPSPMENPQ. The span at 335–346 shows a compositional bias: polar residues; it reads DLSNPSPMENPQ.

It belongs to the HMBS family. Monomer. It depends on dipyrromethane as a cofactor.

The catalysed reaction is 4 porphobilinogen + H2O = hydroxymethylbilane + 4 NH4(+). Its pathway is porphyrin-containing compound metabolism; protoporphyrin-IX biosynthesis; coproporphyrinogen-III from 5-aminolevulinate: step 2/4. Its function is as follows. Tetrapolymerization of the monopyrrole PBG into the hydroxymethylbilane pre-uroporphyrinogen in several discrete steps. This chain is Porphobilinogen deaminase, found in Nocardia farcinica (strain IFM 10152).